A 603-amino-acid polypeptide reads, in one-letter code: DNA mismatch repair protein MutL (603 aa).

The span at 336–346 (EVSKKQKEQQK) shows a compositional bias: basic and acidic residues. 2 disordered regions span residues 336-355 (EVSK…MSFE) and 361-384 (KETP…DTSR).

This sequence belongs to the DNA mismatch repair MutL/HexB family.

Functionally, this protein is involved in the repair of mismatches in DNA. It is required for dam-dependent methyl-directed DNA mismatch repair. May act as a 'molecular matchmaker', a protein that promotes the formation of a stable complex between two or more DNA-binding proteins in an ATP-dependent manner without itself being part of a final effector complex. In Listeria welshimeri serovar 6b (strain ATCC 35897 / DSM 20650 / CCUG 15529 / CIP 8149 / NCTC 11857 / SLCC 5334 / V8), this protein is DNA mismatch repair protein MutL.